The sequence spans 792 residues: Phenylalanine--tRNA ligase beta subunit (792 aa).

In terms of domain architecture, tRNA-binding spans 39–147; it reads ARTLEKVVVG…ADAPIGKNIQ (109 aa). Residues 400-475 form the B5 domain; it reads PKIPRIILRP…HLYGYDRIPQ (76 aa). Residues Asp453, Asp459, Glu462, and Glu463 each coordinate Mg(2+). The FDX-ACB domain occupies 697 to 791; it reads SKFPSIRRDI…LERKFNAKLR (95 aa).

Belongs to the phenylalanyl-tRNA synthetase beta subunit family. Type 1 subfamily. Tetramer of two alpha and two beta subunits. Requires Mg(2+) as cofactor.

It localises to the cytoplasm. It catalyses the reaction tRNA(Phe) + L-phenylalanine + ATP = L-phenylalanyl-tRNA(Phe) + AMP + diphosphate + H(+). This chain is Phenylalanine--tRNA ligase beta subunit, found in Coxiella burnetii (strain RSA 493 / Nine Mile phase I).